The sequence spans 430 residues: MAKHVVVIGGGVGGIATAYNLRNLMPDLKITLISDRPYFGFTPAFPHLAMGWRKFEDISVPLAPLLPKFNIEFINEKAESIDPDANTVTTQSGKKIEYDYLVIATGPKLVFGAEGQEENSTSICTAEHALETQKKLQELYANPGPVVIGAIPGVSCFGPAYEFALMLHYELKKRGIRYKVPMTFITSEPYLGHFGVGGIGASKRLVEDLFAERNIDWIANVAVKAIEPDKVIYEDLNGNTHEVPAKFTMFMPSFQGPEVVASAGDKVANPANKMVIVNRCFQNPTYKNIFGVGVVTAIPPIEKTPIPTGVPKTGMMIEQMAMAVAHNIVNDIRNNPDKYAPRLSAICIADFGEDAGFFFADPVIPPRERVITKMGKWAHYFKTAFEKYFLWKVRNGNIAPSFEEKVLEIFLKVHPIELCKDCEGAPGSRC.

FAD contacts are provided by residues glycine 9–glycine 13, serine 34–arginine 36, threonine 42–proline 43, and threonine 105. Cysteine 156 functions as the Cysteine persulfide intermediate in the catalytic mechanism. Intrachain disulfides connect cysteine 280-cysteine 422 and cysteine 419-cysteine 430. Residues valine 294 and glycine 314 each contribute to the FAD site. Isoleucine 346 is a binding site for a quinone. Cysteine 347 serves as the catalytic Cysteine persulfide intermediate. Position 382 (lysine 382) interacts with FAD.

It belongs to the SQRD family. As to quaternary structure, homotrimer. It depends on FAD as a cofactor.

It localises to the membrane. It catalyses the reaction n a quinone + n hydrogen sulfide + n H(+) = polysulfur(n-2) + n a quinol. Its function is as follows. Catalyzes the oxidation of hydrogen sulfide, with the help of a quinone. Consecutive reaction cycles lead to the accumulation of a polysulfide product on the active site Cys residues; these products are released when they exceed a critical length, typically as cyclooctasulfur. The polypeptide is Sulfide-quinone reductase (Aquifex aeolicus (strain VF5)).